We begin with the raw amino-acid sequence, 738 residues long: Squalene hopane cyclase afumA (738 aa).

PFTB repeat units lie at residues 132–173 (GSQY…RIIG) and 321–361 (RRRC…KLHD). The Proton donor role is filled by aspartate 460. PFTB repeat units follow at residues 482 to 523 (VRDA…ESLC), 581 to 621 (CARA…QYFK), and 634 to 675 (AARA…SQTA).

This sequence belongs to the terpene cyclase/mutase family.

It participates in secondary metabolite biosynthesis. Squalene hopane cyclase; part of the gene cluster that mediates the biosynthesis fumihopaside A, a hopane-type glucoside that enhances the thermotolerance and UV resistance of N.fumigata. The first step of fumihopaside A biosynthesis is performed by the squalene hopane cyclase afumA that catalyzes the cyclization of 3S-oxidosqualene into the hopene 21-beta-H-hopane-3-beta,22-diol. The cytochrome P450 monooxygenase afumB is responsible for both hydroxylation at C-24 and oxidations at C-30 of the afumA product. The glycosyltransferase afumC then catalyzes the glycosylation at C-24, using UDP-D-glucose as a donor, to produce fumihopaside A. AfumC is also able to accept UDP-D-galactose and UDP-D-glucuronic acid as donors to yield minor derivatives. Fumihopaside B, another minor derivative produced, is different from fumihopaside A due to the presence of a double bond between C-22 and C-29. This chain is Squalene hopane cyclase afumA, found in Aspergillus fumigatus (strain CBS 144.89 / FGSC A1163 / CEA10) (Neosartorya fumigata).